The primary structure comprises 743 residues: Threonine synthase-like 1 (743 aa).

K281 carries the post-translational modification N6-acetyllysine. At K351 the chain carries N6-(pyridoxal phosphate)lysine.

This sequence belongs to the threonine synthase family. Pyridoxal 5'-phosphate is required as a cofactor.

The polypeptide is Threonine synthase-like 1 (THNSL1) (Pongo abelii (Sumatran orangutan)).